The following is a 519-amino-acid chain: 2-isopropylmalate synthase (519 aa).

Residues valine 5 to serine 267 form the Pyruvate carboxyltransferase domain. Mn(2+) is bound by residues aspartate 14, histidine 202, histidine 204, and asparagine 238. The interval lysine 392–valine 519 is regulatory domain.

The protein belongs to the alpha-IPM synthase/homocitrate synthase family. LeuA type 1 subfamily. In terms of assembly, homodimer. Mn(2+) is required as a cofactor.

The protein localises to the cytoplasm. It catalyses the reaction 3-methyl-2-oxobutanoate + acetyl-CoA + H2O = (2S)-2-isopropylmalate + CoA + H(+). It functions in the pathway amino-acid biosynthesis; L-leucine biosynthesis; L-leucine from 3-methyl-2-oxobutanoate: step 1/4. Functionally, catalyzes the condensation of the acetyl group of acetyl-CoA with 3-methyl-2-oxobutanoate (2-ketoisovalerate) to form 3-carboxy-3-hydroxy-4-methylpentanoate (2-isopropylmalate). In Pseudoalteromonas atlantica (strain T6c / ATCC BAA-1087), this protein is 2-isopropylmalate synthase.